The sequence spans 80 residues: Large ribosomal subunit protein bL31B (80 aa).

This sequence belongs to the bacterial ribosomal protein bL31 family. Type B subfamily. As to quaternary structure, part of the 50S ribosomal subunit.

The chain is Large ribosomal subunit protein bL31B from Xylella fastidiosa (strain M23).